Consider the following 33-residue polypeptide: MLFTVAWASLAAMFSFSIAMVVWGRNGDGTLKF.

Residues 2–22 (LFTVAWASLAAMFSFSIAMVV) form a helical membrane-spanning segment.

The protein belongs to the PetN family. The 4 large subunits of the cytochrome b6-f complex are cytochrome b6, subunit IV (17 kDa polypeptide, PetD), cytochrome f and the Rieske protein, while the 4 small subunits are PetG, PetL, PetM and PetN. The complex functions as a dimer.

It is found in the cellular thylakoid membrane. Functionally, component of the cytochrome b6-f complex, which mediates electron transfer between photosystem II (PSII) and photosystem I (PSI), cyclic electron flow around PSI, and state transitions. The polypeptide is Cytochrome b6-f complex subunit 8 (Synechococcus sp. (strain CC9902)).